The following is a 299-amino-acid chain: Troponin T, cardiac muscle (299 aa).

Acidic residues predominate over residues 1–71 (MSDAEEEVVE…EARDAEDGPV (71 aa)). 2 disordered regions span residues 1-97 (MSDA…GERV) and 137-220 (DRIE…EKKK). Ser-2 is subject to N-acetylserine. Ser-2 is modified (phosphoserine). Composition is skewed to basic and acidic residues over residues 137–185 (DRIE…DEAR) and 204–220 (QTER…EKKK). Thr-205 is subject to Phosphothreonine; by PKC/PRKCA. At Ser-209 the chain carries Phosphoserine; by PKC/PRKCA. At Thr-214 the chain carries Phosphothreonine; by PKC/PRKCA and RAF1. Residue Thr-295 is modified to Phosphothreonine; by PKC/PRKCA.

Belongs to the troponin T family. Post-translationally, phosphorylation at Thr-214 by PRKCA induces significant reduction in myofilament calcium sensitivity and actomyosin ATPase activity.

Functionally, troponin T is the tropomyosin-binding subunit of troponin, the thin filament regulatory complex which confers calcium-sensitivity to striated muscle actomyosin ATPase activity. This Rattus norvegicus (Rat) protein is Troponin T, cardiac muscle (Tnnt2).